We begin with the raw amino-acid sequence, 213 residues long: UPF0502 protein Daro_2469 (213 aa).

This sequence belongs to the UPF0502 family.

The sequence is that of UPF0502 protein Daro_2469 from Dechloromonas aromatica (strain RCB).